The following is a 443-amino-acid chain: Citrate transporter CitP (443 aa).

13 helical membrane-spanning segments follow: residues 27–47 (ISGI…IAIS), 59–79 (IFAL…LPIF), 83–103 (LGGG…TNVM), 114–134 (FING…SSLF), 151–171 (VAFI…VIIG), 177–197 (AILY…IVPL), 209–229 (SAGI…LAII), 268–288 (YVQL…GTML), 294–314 (GINA…FGLL), 322–342 (VIMF…AGVG), 350–370 (VLLA…IVAI), 388–410 (AAIT…VLAA), and 422–442 (MGNR…VTFM).

This sequence belongs to the 2-hydroxycarboxylate transporter (2-HCT) (TC 2.A.24) family.

It is found in the cell membrane. The enzyme catalyses (R)-lactate(in) + citrate(out) = (R)-lactate(out) + citrate(in). It catalyses the reaction (S)-lactate(in) + citrate(out) = (S)-lactate(out) + citrate(in). The catalysed reaction is citrate(in) + H(+)(in) = citrate(out) + H(+)(out). Its activity is regulated as follows. Uptake of citrate is not affected by the absence or presence of Na(+) up to 25 mM and is increasingly inhibited by increasing Mg(2+) concentrations. Functionally, secondary transporter involved in citrate metabolism. During cometabolism of citrate and glucose, catalyzes the uptake of divalent citrate into the cell coupled to the exit of monovalent lactate, a product of citrate fermentation during citrate-glucose cometabolism (precursor/product exchange). The citrate/lactate exchange is electrogenic and results in the generation of a membrane potential. In the absence of glucose, i.e. when no lactate is produced, CitP catalyzes the proton-dependent transport of citrate and malate. Transports the divalent form of citrate and malate with the concomitant uptake of one proton, therefore translocating a single unit of negative charge across the membrane. In vitro, transports a range of substrates that contain the 2-hydroxycarboxylate motif, HO-CR(2)-COO(-), with a preference for malate, citrate and monovalent 2-hydroxyisobutyrate. Modification of the OH or the COO(-) groups of the 2-hydroxycarboxylate motif drastically reduces the affinity of the transporter for the substrates, indicating their relevance in substrate recognition. Significant activity is also observed with some 2-oxocarboxylates and a 3-hydroxycarboxylate. The protein is Citrate transporter CitP of Leuconostoc mesenteroides subsp. mesenteroides.